Here is a 379-residue protein sequence, read N- to C-terminus: Homoserine O-acetyltransferase (379 aa).

The region spanning 52–356 (NVVVVLHALT…VYGHDGFLVE (305 aa)) is the AB hydrolase-1 domain. The active-site Nucleophile is S157. R227 contacts substrate. Catalysis depends on residues D320 and H350. Substrate is bound at residue D351.

It belongs to the AB hydrolase superfamily. MetX family. As to quaternary structure, homodimer.

The protein localises to the cytoplasm. It carries out the reaction L-homoserine + acetyl-CoA = O-acetyl-L-homoserine + CoA. It participates in amino-acid biosynthesis; L-methionine biosynthesis via de novo pathway; O-acetyl-L-homoserine from L-homoserine: step 1/1. Its function is as follows. Transfers an acetyl group from acetyl-CoA to L-homoserine, forming acetyl-L-homoserine. The sequence is that of Homoserine O-acetyltransferase from Mycobacterium bovis (strain ATCC BAA-935 / AF2122/97).